The chain runs to 498 residues: Nucleoprotein (498 aa).

Positions 1 to 18 (MASQGTKRSYEQMETDGE) match the Unconventional nuclear localization signal motif. Residues 1–21 (MASQGTKRSYEQMETDGERQN) form a disordered region. The segment covering 8–21 (RSYEQMETDGERQN) has biased composition (basic and acidic residues). A Bipartite nuclear localization signal motif is present at residues 198-216 (KRGINDRNFWRGENGRKTR).

It belongs to the influenza viruses nucleoprotein family. As to quaternary structure, homomultimerizes to form the nucleocapsid. May bind host exportin-1/XPO1. Binds to viral genomic RNA. Protein-RNA contacts are mediated by a combination of electrostatic interactions between positively charged residues and the phosphate backbone and planar interactions between aromatic side chains and bases. Post-translationally, late in virus-infected cells, may be cleaved from a 56-kDa protein to a 53-kDa protein by a cellular caspase. This cleavage might be a marker for the onset of apoptosis in infected cells or have a specific function in virus host interaction.

Its subcellular location is the virion. The protein resides in the host nucleus. Functionally, encapsidates the negative strand viral RNA, protecting it from nucleases. The encapsidated genomic RNA is termed the ribonucleoprotein (RNP) and serves as template for transcription and replication. The RNP needs to be localized in the host nucleus to start an infectious cycle, but is too large to diffuse through the nuclear pore complex. NP comprises at least 2 nuclear localization signals that are responsible for the active RNP import into the nucleus through cellular importin alpha/beta pathway. Later in the infection, nclear export of RNPs are mediated through viral proteins NEP interacting with M1 which binds nucleoproteins. It is possible that nucleoprotein binds directly host exportin-1/XPO1 and plays an active role in RNPs nuclear export. M1 interaction with RNP seems to hide nucleoprotein's nuclear localization signals. Soon after a virion infects a new cell, M1 dissociates from the RNP under acidification of the virion driven by M2 protein. Dissociation of M1 from RNP unmasks nucleoprotein's nuclear localization signals, targeting the RNP to the nucleus. The polypeptide is Nucleoprotein (Influenza A virus (strain A/China:Nanchang/11/1996 H1N1)).